The sequence spans 1044 residues: GRB10-interacting GYF protein 1 (1044 aa).

Ser24, Ser28, Ser137, and Ser157 each carry phosphoserine. Disordered regions lie at residues 104–290 (GKGA…DGLP) and 306–424 (ASGA…LEDE). Basic and acidic residues-rich tracts occupy residues 148-179 (NPREIQRSQSWDDRGERRFEKPARRDGVRSGF) and 186-203 (PRKEHARSDSENWRSLRE). Residue Ser228 is modified to Phosphoserine. Basic and acidic residues-rich tracts occupy residues 237–265 (GWREHGERRRKFDFDLRGERGGCGEEDGR) and 316–332 (GPKEAIPEEQELDFRGL). Positions 333 to 350 (EEEEEEEEEPSEGVDEER) are enriched in acidic residues. Residue Ser343 is modified to Phosphoserine. The span at 366–379 (NSSSPSSLPALGPL) shows a compositional bias: low complexity. The segment covering 389 to 403 (AVEKELPPAEGDELR) has biased composition (basic and acidic residues). Position 408 is a phosphoserine (Ser408). The region spanning 476–524 (ARKWFYKDPQGEIQGPFTTQEMAEWFQAGYFSMSLLVKRGCDEGFQPLG) is the GYF domain. Residues Ser540 and Ser634 each carry the phosphoserine modification. Basic and acidic residues predominate over residues 692 to 706 (KREEEERKRREEKRR). Disordered regions lie at residues 692–721 (KREEEERKRREEKRRQQQQQQEEQKRRQEE), 820–842 (EAGPLWGGPDKSGGSSGGNLGLW), 855–883 (SLGLKSSRSSPSLSDSYSHLSGRPVRKKT), 966–987 (QKASQQRQQQQQQQQQQQQEAW), 1000–1019 (NHSTKLGPGEGSKAKRRALM), and 1024–1044 (PSILGYSLHGPSGEIESVDDY). The span at 829 to 839 (DKSGGSSGGNL) shows a compositional bias: gly residues. Composition is skewed to low complexity over residues 855–877 (SLGLKSSRSSPSLSDSYSHLSGR) and 970–984 (QQRQQQQQQQQQQQQ). Phosphoserine is present on Ser863.

It belongs to the GIGYF family. Interacts with GRB10. This transient binding is increased under IGF1 stimulation and leads to recruitment of GIGYF1/GRB10 complex to IGF1 receptor. Interacts with DDX6. As to expression, ubiquitous. Lower expression in skeletal muscle, liver and testis.

Functionally, may act cooperatively with GRB10 to regulate tyrosine kinase receptor signaling. May increase IGF1 receptor phosphorylation under IGF1 stimulation as well as phosphorylation of IRS1 and SHC1. This chain is GRB10-interacting GYF protein 1 (Gigyf1), found in Mus musculus (Mouse).